Reading from the N-terminus, the 270-residue chain is Aliphatic sulfonates import ATP-binding protein SsuB 3 (270 aa).

An ABC transporter domain is found at 17–238; that stretch reads LAVRNLKKAF…VRGSHRLAAL (222 aa). 49–56 lines the ATP pocket; that stretch reads GRSGCGKS.

Belongs to the ABC transporter superfamily. Aliphatic sulfonates importer (TC 3.A.1.17.2) family. As to quaternary structure, the complex is composed of two ATP-binding proteins (SsuB), two transmembrane proteins (SsuC) and a solute-binding protein (SsuA).

The protein localises to the cell inner membrane. It catalyses the reaction ATP + H2O + aliphatic sulfonate-[sulfonate-binding protein]Side 1 = ADP + phosphate + aliphatic sulfonateSide 2 + [sulfonate-binding protein]Side 1.. Part of the ABC transporter complex SsuABC involved in aliphatic sulfonates import. Responsible for energy coupling to the transport system. The chain is Aliphatic sulfonates import ATP-binding protein SsuB 3 from Pseudomonas savastanoi pv. phaseolicola (strain 1448A / Race 6) (Pseudomonas syringae pv. phaseolicola (strain 1448A / Race 6)).